A 183-amino-acid chain; its full sequence is UPF0397 protein VSAL_I1988 (183 aa).

A run of 5 helical transmembrane segments spans residues 8-28, 41-61, 74-94, 110-130, and 147-167; these read VVVI…MFGI, AVLA…VGFI, VWLT…LFPI, FFIF…TSAF, and LCII…FILT.

Belongs to the UPF0397 family.

It is found in the cell membrane. The protein is UPF0397 protein VSAL_I1988 of Aliivibrio salmonicida (strain LFI1238) (Vibrio salmonicida (strain LFI1238)).